A 38-amino-acid chain; its full sequence is Photosystem II reaction center protein L (38 aa).

Residues 17–37 (SLFWGLLLIFVLAVLFSSYFF) form a helical membrane-spanning segment.

This sequence belongs to the PsbL family. In terms of assembly, PSII is composed of 1 copy each of membrane proteins PsbA, PsbB, PsbC, PsbD, PsbE, PsbF, PsbH, PsbI, PsbJ, PsbK, PsbL, PsbM, PsbT, PsbX, PsbY, PsbZ, Psb30/Ycf12, at least 3 peripheral proteins of the oxygen-evolving complex and a large number of cofactors. It forms dimeric complexes.

It localises to the plastid. The protein localises to the chloroplast thylakoid membrane. Functionally, one of the components of the core complex of photosystem II (PSII). PSII is a light-driven water:plastoquinone oxidoreductase that uses light energy to abstract electrons from H(2)O, generating O(2) and a proton gradient subsequently used for ATP formation. It consists of a core antenna complex that captures photons, and an electron transfer chain that converts photonic excitation into a charge separation. This subunit is found at the monomer-monomer interface and is required for correct PSII assembly and/or dimerization. This is Photosystem II reaction center protein L from Zygnema circumcarinatum (Green alga).